A 382-amino-acid polypeptide reads, in one-letter code: 1-deoxy-D-xylulose 5-phosphate reductoisomerase (382 aa).

NADPH contacts are provided by Thr-11, Gly-12, Ser-13, Ile-14, and Asn-123. Lys-124 provides a ligand contact to 1-deoxy-D-xylulose 5-phosphate. An NADPH-binding site is contributed by Glu-125. Asp-149 contributes to the Mn(2+) binding site. Residues Ser-150, Glu-151, Ser-173, and His-196 each contribute to the 1-deoxy-D-xylulose 5-phosphate site. Glu-151 lines the Mn(2+) pocket. An NADPH-binding site is contributed by Gly-202. 1-deoxy-D-xylulose 5-phosphate-binding residues include Ser-209, Asn-214, Lys-215, and Glu-218. Glu-218 serves as a coordination point for Mn(2+).

This sequence belongs to the DXR family. Mg(2+) serves as cofactor. It depends on Mn(2+) as a cofactor.

It carries out the reaction 2-C-methyl-D-erythritol 4-phosphate + NADP(+) = 1-deoxy-D-xylulose 5-phosphate + NADPH + H(+). It participates in isoprenoid biosynthesis; isopentenyl diphosphate biosynthesis via DXP pathway; isopentenyl diphosphate from 1-deoxy-D-xylulose 5-phosphate: step 1/6. Catalyzes the NADPH-dependent rearrangement and reduction of 1-deoxy-D-xylulose-5-phosphate (DXP) to 2-C-methyl-D-erythritol 4-phosphate (MEP). The polypeptide is 1-deoxy-D-xylulose 5-phosphate reductoisomerase (Phocaeicola vulgatus (strain ATCC 8482 / DSM 1447 / JCM 5826 / CCUG 4940 / NBRC 14291 / NCTC 11154) (Bacteroides vulgatus)).